The primary structure comprises 86 residues: Small ribosomal subunit protein bS20 (86 aa).

Residues 1–22 (MANIKSAKKRAVQSEKRRKHNA) show a composition bias toward basic residues. The interval 1 to 28 (MANIKSAKKRAVQSEKRRKHNASGRSMM) is disordered.

The protein belongs to the bacterial ribosomal protein bS20 family.

In terms of biological role, binds directly to 16S ribosomal RNA. The polypeptide is Small ribosomal subunit protein bS20 (Serratia proteamaculans (strain 568)).